An 829-amino-acid polypeptide reads, in one-letter code: Colorectal mutant cancer protein (829 aa).

Disordered regions lie at residues 114–139, 282–320, and 672–700; these read RSEL…TSVS, TRLQ…SSND, and EEQK…CADA. A compositionally biased stretch (basic and acidic residues) spans 123–132; the sequence is EVNEDSRSMD. A compositionally biased stretch (polar residues) spans 285-312; sequence QSVQATGPSSPGRLTSTNRPINPSTGEL. Positions 689–698 are enriched in basic and acidic residues; it reads SKDKPGKECA. The short motif at 766–782 is the Nuclear localization signal element; that stretch reads KRANSNLVAAYEKAKKK. The PDZ-binding signature appears at 826 to 829; the sequence is ETSL. Position 828 is a phosphoserine (Ser-828).

It belongs to the MCC family. Interacts with SCRIB (via phosphorylated PDZ-binding motif), EZR, SNX27, NHERF1 and NHERF2. Interacts with CTNNB1; the interaction is enhanced upon Wnt stimulation. Interacts with MYH10. Interacts with CCAR2. As to expression, expressed in a variety of tissues.

The protein localises to the cell membrane. Its subcellular location is the cell projection. The protein resides in the lamellipodium. It localises to the nucleus. It is found in the cytoplasm. Its function is as follows. Candidate for the putative colorectal tumor suppressor gene located at 5q21. Suppresses cell proliferation and the Wnt/b-catenin pathway in colorectal cancer cells. Inhibits DNA binding of b-catenin/TCF/LEF transcription factors. Involved in cell migration independently of RAC1, CDC42 and p21-activated kinase (PAK) activation. Represses the beta-catenin pathway (canonical Wnt signaling pathway) in a CCAR2-dependent manner by sequestering CCAR2 to the cytoplasm, thereby impairing its ability to inhibit SIRT1 which is involved in the deacetylation and negative regulation of beta-catenin (CTNB1) transcriptional activity. The polypeptide is Colorectal mutant cancer protein (MCC) (Homo sapiens (Human)).